The following is a 109-amino-acid chain: Protein reprimo (109 aa).

N-linked (GlcNAc...) asparagine glycosylation is found at asparagine 7 and asparagine 18. The chain crosses the membrane as a helical span at residues 56-76 (VVQIAVMCVLSLTVVFGIFFL). Phosphoserine is present on serine 98.

Belongs to the reprimo family.

The protein localises to the cytoplasm. The protein resides in the membrane. In terms of biological role, may be involved in the regulation of p53-dependent G2 arrest of the cell cycle. Seems to induce cell cycle arrest by inhibiting CDK1 activity and nuclear translocation of the CDC2 cyclin B1 complex. This chain is Protein reprimo (RPRM), found in Bos taurus (Bovine).